We begin with the raw amino-acid sequence, 142 residues long: Hemoglobin larval subunit alpha (142 aa).

Residues 2–142 (VLSAEEKALV…VSAVLTSKYR (141 aa)) form the Globin domain. O2 is bound at residue His59. A heme b-binding site is contributed by His88.

Belongs to the globin family. Heterotetramer of two alpha chains and two beta chains. As to expression, red blood cells.

Its function is as follows. Involved in oxygen transport from the lung to the various peripheral tissues. In Pleurodeles waltl (Iberian ribbed newt), this protein is Hemoglobin larval subunit alpha.